The primary structure comprises 89 residues: Small ribosomal subunit protein uS15 (89 aa).

The protein belongs to the universal ribosomal protein uS15 family. In terms of assembly, part of the 30S ribosomal subunit. Forms a bridge to the 50S subunit in the 70S ribosome, contacting the 23S rRNA.

Its function is as follows. One of the primary rRNA binding proteins, it binds directly to 16S rRNA where it helps nucleate assembly of the platform of the 30S subunit by binding and bridging several RNA helices of the 16S rRNA. In terms of biological role, forms an intersubunit bridge (bridge B4) with the 23S rRNA of the 50S subunit in the ribosome. In Shewanella denitrificans (strain OS217 / ATCC BAA-1090 / DSM 15013), this protein is Small ribosomal subunit protein uS15.